The sequence spans 26 residues: MVWLVWKRSTISRKNKKFFKTIFKKN.

Its subcellular location is the plastid. It localises to the chloroplast. This is an uncharacterized protein from Trieres chinensis (Marine centric diatom).